We begin with the raw amino-acid sequence, 136 residues long: Ig heavy chain V region XIG8 (136 aa).

The signal sequence occupies residues 1–18 (GFGIFVIFMFFSPSCILS). The region spanning 19–128 (QTLQESGPGT…TAGYFEHWGQ (110 aa)) is the Ig-like domain.

The sequence is that of Ig heavy chain V region XIG8 from Xenopus laevis (African clawed frog).